We begin with the raw amino-acid sequence, 270 residues long: Regulatory protein RecX (270 aa).

Belongs to the RecX family.

The protein localises to the cytoplasm. In terms of biological role, modulates RecA activity. The protein is Regulatory protein RecX of Bacillus cereus (strain AH187).